The sequence spans 65 residues: UPF0434 protein BRADO0313 (65 aa).

The protein belongs to the UPF0434 family.

This chain is UPF0434 protein BRADO0313, found in Bradyrhizobium sp. (strain ORS 278).